We begin with the raw amino-acid sequence, 294 residues long: Ankyrin repeat and SOCS box protein 9 (294 aa).

An N-acetylmethionine modification is found at Met-1. ANK repeat units lie at residues 35 to 64 (SDWS…AVNI), 68 to 97 (DHVS…QVNG), 101 to 130 (DWHT…SVQP), 133 to 162 (DLAS…NIDH), 166 to 195 (HLGT…DVNQ), and 198 to 227 (GQDS…DTQA). Ser-51 carries the post-translational modification Phosphoserine. Residues 240-294 (PPESPLAQLFLEREGPPSLMQLCRLRIRKCFGIQQHHKITKLVLPEDLKQFLLHL) enclose the SOCS box domain.

It belongs to the ankyrin SOCS box (ASB) family. Substrate-recognition component of the ECS(ASB9) complex, composed of ASB9, CUL5, ELOB, ELOC and RNF7/RBX2. In terms of tissue distribution, predominantly expressed in testis, kidney, and liver.

The protein localises to the mitochondrion. It functions in the pathway protein modification; protein ubiquitination. Functionally, substrate-recognition component of a cullin-5-RING E3 ubiquitin-protein ligase complex (ECS complex, also named CRL5 complex), which mediates the ubiquitination and subsequent proteasomal degradation of target proteins. The ECS(ASB9) complex catalyzes ubiquitination of creatine kinases CKB and CKMT1A. Its function is as follows. Does not interact with the Elongin BC complex, likely to be a negative regulator of isoform 1. The sequence is that of Ankyrin repeat and SOCS box protein 9 from Homo sapiens (Human).